The chain runs to 423 residues: Adenylosuccinate synthetase (423 aa).

Residues 11-17 (GDEGKGK) and 39-41 (GHT) contribute to the GTP site. Catalysis depends on D12, which acts as the Proton acceptor. Mg(2+) is bound by residues D12 and G39. Residues 12–15 (DEGK), 37–40 (NAGH), T129, R143, N219, T234, and R298 contribute to the IMP site. The active-site Proton donor is the H40. 294 to 300 (VTTGRRR) provides a ligand contact to substrate. GTP is bound by residues R300, 326-328 (KLD), and 411-413 (GTG).

This sequence belongs to the adenylosuccinate synthetase family. Homodimer. Mg(2+) serves as cofactor.

It localises to the cytoplasm. It catalyses the reaction IMP + L-aspartate + GTP = N(6)-(1,2-dicarboxyethyl)-AMP + GDP + phosphate + 2 H(+). Its pathway is purine metabolism; AMP biosynthesis via de novo pathway; AMP from IMP: step 1/2. Functionally, plays an important role in the de novo pathway and in the salvage pathway of purine nucleotide biosynthesis. Catalyzes the first committed step in the biosynthesis of AMP from IMP. This is Adenylosuccinate synthetase from Penicillium rubens (strain ATCC 28089 / DSM 1075 / NRRL 1951 / Wisconsin 54-1255) (Penicillium chrysogenum).